The following is a 209-amino-acid chain: Peptide methionine sulfoxide reductase MsrA (209 aa).

The active site involves C51.

This sequence belongs to the MsrA Met sulfoxide reductase family.

It catalyses the reaction L-methionyl-[protein] + [thioredoxin]-disulfide + H2O = L-methionyl-(S)-S-oxide-[protein] + [thioredoxin]-dithiol. The catalysed reaction is [thioredoxin]-disulfide + L-methionine + H2O = L-methionine (S)-S-oxide + [thioredoxin]-dithiol. Has an important function as a repair enzyme for proteins that have been inactivated by oxidation. Catalyzes the reversible oxidation-reduction of methionine sulfoxide in proteins to methionine. The sequence is that of Peptide methionine sulfoxide reductase MsrA from Vibrio vulnificus (strain CMCP6).